The primary structure comprises 348 residues: Phosphoribosylformylglycinamidine cyclo-ligase (348 aa).

This sequence belongs to the AIR synthase family.

The protein localises to the cytoplasm. The catalysed reaction is 2-formamido-N(1)-(5-O-phospho-beta-D-ribosyl)acetamidine + ATP = 5-amino-1-(5-phospho-beta-D-ribosyl)imidazole + ADP + phosphate + H(+). It participates in purine metabolism; IMP biosynthesis via de novo pathway; 5-amino-1-(5-phospho-D-ribosyl)imidazole from N(2)-formyl-N(1)-(5-phospho-D-ribosyl)glycinamide: step 2/2. The sequence is that of Phosphoribosylformylglycinamidine cyclo-ligase from Citrifermentans bemidjiense (strain ATCC BAA-1014 / DSM 16622 / JCM 12645 / Bem) (Geobacter bemidjiensis).